We begin with the raw amino-acid sequence, 191 residues long: Flavin reductase (NADH) (191 aa).

46-52 serves as a coordination point for FAD; that stretch reads YGLTCSA. An NAD(+)-binding site is contributed by Ser-55. Position 72–73 (72–73) interacts with FAD; sequence RV. Residues His-144 and 166–169 each bind NAD(+); that span reads YWRR.

This sequence belongs to the non-flavoprotein flavin reductase family.

The enzyme catalyses a reduced flavin + NAD(+) = an oxidized flavin + NADH + 2 H(+). In terms of biological role, catalyzes the reduction of flavin by NADH. Subsequently, the reduced flavins is transferred to the tetracycline 7-halogenase CtcP. This Kitasatospora aureofaciens (Streptomyces aureofaciens) protein is Flavin reductase (NADH).